A 191-amino-acid chain; its full sequence is MMVSCMGSLWVILSLILTLISGFSLMSSAWYKTDTISFGVFVHCIGPKNMPCNQTCIYYRTLEEIPDIFGKIAAVLLFGGWLLLSFGAVLVLSWTIIPVGLCQRRVCTPARYAQISAVVVTVLGLLVFPFNLHSEFARQICGSSFIYKSGDCCLGWGYMMAIVTVMLSCFLPFIGRYNLNEIKTKILLSKM.

4 consecutive transmembrane segments (helical) span residues 6-26 (MGSL…FSLM), 72-92 (IAAV…VLVL), 112-132 (YAQI…PFNL), and 154-174 (LGWG…LPFI).

This sequence belongs to the TMEM211 family.

Its subcellular location is the membrane. The polypeptide is LHFPL tetraspan subfamily member 7 protein (lhfpl7) (Xenopus tropicalis (Western clawed frog)).